Here is a 314-residue protein sequence, read N- to C-terminus: Olfactory receptor 51G2 (314 aa).

The Extracellular portion of the chain corresponds to 1–30; that stretch reads MTLGSLGNSSSSVSATFLLSGIPGLERMHI. A glycan (N-linked (GlcNAc...) asparagine) is linked at Asn8. A helical transmembrane segment spans residues 31–51; the sequence is WISIPLCFMYLVSIPGNCTIL. The Cytoplasmic segment spans residues 52 to 59; the sequence is FIIKTERS. Residues 60 to 80 form a helical membrane-spanning segment; the sequence is LHEPMYLFLSMLALIDLGLSL. Residues 81 to 104 lie on the Extracellular side of the membrane; it reads CTLPTVLGIFWVGAREISHDACFA. Residues Cys102 and Cys194 are joined by a disulfide bond. The helical transmembrane segment at 105-125 threads the bilayer; the sequence is QLFFIHCFSFLESSVLLSMAF. Over 126–144 the chain is Cytoplasmic; it reads DRFVAICHPLHYVSILTNT. The helical transmembrane segment at 145-165 threads the bilayer; that stretch reads VIGRIGLVSLGRSVALIFPLP. Residues 166–201 lie on the Extracellular side of the membrane; sequence FMLKRFPYCGSPVLSHSYCLHQEVMKLACADMKANS. The chain crosses the membrane as a helical span at residues 202-222; that stretch reads IYGMFVIVSTVGIDSLLILFS. The Cytoplasmic portion of the chain corresponds to 223–242; sequence YALILRTVLSIASRAERFKA. A helical membrane pass occupies residues 243-263; sequence LNTCVSHICAVLLFYTPMIGL. The Extracellular portion of the chain corresponds to 264–278; the sequence is SVIHRFGKQAPHLVQ. The helical transmembrane segment at 279 to 299 threads the bilayer; it reads VVMGFMYLLFPPVMNPIVYSV. The Cytoplasmic segment spans residues 300-314; sequence KTKQIRDRVTHAFCY.

The protein belongs to the G-protein coupled receptor 1 family.

Its subcellular location is the cell membrane. Functionally, odorant receptor. The chain is Olfactory receptor 51G2 (OR51G2) from Homo sapiens (Human).